Reading from the N-terminus, the 297-residue chain is Cytidine deaminase (297 aa).

2 CMP/dCMP-type deaminase domains span residues 50–170 (SDKE…FGPK) and 189–297 (ETES…YASL). 91 to 93 (NME) is a substrate binding site. His104 is a binding site for Zn(2+). Glu106 (proton donor) is an active-site residue. Residues Cys131 and Cys134 each coordinate Zn(2+).

This sequence belongs to the cytidine and deoxycytidylate deaminase family. As to quaternary structure, homodimer. Requires Zn(2+) as cofactor.

The catalysed reaction is cytidine + H2O + H(+) = uridine + NH4(+). The enzyme catalyses 2'-deoxycytidine + H2O + H(+) = 2'-deoxyuridine + NH4(+). Its function is as follows. This enzyme scavenges exogenous and endogenous cytidine and 2'-deoxycytidine for UMP synthesis. This is Cytidine deaminase from Aliivibrio fischeri (strain ATCC 700601 / ES114) (Vibrio fischeri).